Consider the following 587-residue polypeptide: Cryptochrome-1 (587 aa).

Residues valine 3–leucine 132 enclose the Photolyase/cryptochrome alpha/beta domain. Residue lysine 11 forms a Glycyl lysine isopeptide (Lys-Gly) (interchain with G-Cter in ubiquitin) linkage. The short motif at asparagine 50–phenylalanine 54 is the LIR 1 element. Serine 71 carries the phosphoserine; by AMPK modification. The LIR 2 motif lies at aspartate 82–leucine 87. A Glycyl lysine isopeptide (Lys-Gly) (interchain with G-Cter in ubiquitin) cross-link involves residue lysine 107. The LIR 3 signature appears at lysine 151 to leucine 156. A Glycyl lysine isopeptide (Lys-Gly) (interchain with G-Cter in ubiquitin) cross-link involves residue lysine 159. Serine 247 bears the Phosphoserine; by MAPK mark. Serine 252 lines the FAD pocket. 2 consecutive short sequence motifs (LIR) follow at residues leucine 255–leucine 260 and aspartate 271–valine 276. Position 280 is a phosphoserine; by AMPK (serine 280). An LIR 6 motif is present at residues serine 285 to leucine 290. Glutamine 289 lines the FAD pocket. Residue lysine 329 forms a Glycyl lysine isopeptide (Lys-Gly) (interchain with G-Cter in ubiquitin) linkage. Positions threonine 335 to tryptophan 339 match the LIR 7 motif. FAD is bound at residue histidine 355. The tract at residues tryptophan 371 to methionine 470 is required for inhibition of CLOCK-BMAL1-mediated transcription. Positions lysine 379–leucine 384 match the LIR 8 motif. Aspartate 387–aspartate 389 serves as a coordination point for FAD. 3 consecutive short sequence motifs (LIR) follow at residues glycine 395–leucine 400, histidine 411–valine 416, and arginine 430–valine 435. The segment at valine 471–arginine 493 is interaction with TIMELESS. A Glycyl lysine isopeptide (Lys-Gly) (interchain with G-Cter in ubiquitin) cross-link involves residue lysine 485. 2 short sequence motifs (LIR) span residues glutamine 486 to leucine 491 and serine 492 to leucine 497. The segment at glycine 554–asparagine 587 is disordered. At serine 569 the chain carries Phosphoserine.

It belongs to the DNA photolyase class-1 family. Component of the circadian core oscillator, which includes the CRY proteins, CLOCK or NPAS2, BMAL1 or BMAL2, CSNK1D and/or CSNK1E, TIMELESS, and the PER proteins. Interacts directly with TIMELESS. Interacts directly with PER1, PER2 and PER3; interaction with PER2 inhibits its ubiquitination and vice versa. Interacts with FBXL21. Interacts with FBXL3. Interacts with CLOCK-BMAL1 independently of PER2 and DNA. Interacts with HDAC1, HDAC2 and SIN3B. Interacts with nuclear receptors AR, NR1D1, NR3C1/GR, RORA and RORC; the interaction with at least NR3C1/GR is ligand dependent. Interacts with PRKDC. Interacts with the G protein subunit alpha GNAS; the interaction may block GPCR-mediated regulation of cAMP concentrations. Interacts with PRMT5. Interacts with EZH2. Interacts with MYBBP1A, DOCK7, HNRNPU, RPL7A, RPL8 and RPS3. Interacts with PPP5C (via TPR repeats). Interacts with MAP1LC3B. Interacts with CLOCK. Interacts with BMAL1. Interacts weakly with HDAC3; this interaction is enhanced in the presence of FBXL3. Interacts with TRIM28, KCTD5 and DDB1 Interacts with HNF4A. Interacts with PSMD2 in a KDM8-dependent manner. Interacts with KDM8 in a FBXL3-dependent manner. Interacts with PPARG in a ligand-dependent manner. Interacts with PPARD (via domain NR LBD) and NR1I2 (via domain NR LBD) in a ligand-dependent manner. Interacts with PPARA, NR1I3 and VDR. The cofactor is FAD. Requires (6R)-5,10-methylene-5,6,7,8-tetrahydrofolate as cofactor. In terms of processing, phosphorylation on Ser-247 by MAPK is important for the inhibition of CLOCK-BMAL1-mediated transcriptional activity. Phosphorylation by CSNK1E requires interaction with PER1 or PER2. Phosphorylation at Ser-71 and Ser-280 by AMPK decreases protein stability. Phosphorylation at Ser-569 exhibits a robust circadian rhythm with a peak at CT8, increases protein stability, prevents SCF(FBXL3)-mediated degradation and is antagonized by interaction with PRKDC. Post-translationally, ubiquitinated by the SCF(FBXL3) and SCF(FBXL21) complexes, regulating the balance between degradation and stabilization. The SCF(FBXL3) complex is mainly nuclear and mediates ubiquitination and subsequent degradation of CRY1. In contrast, cytoplasmic SCF(FBXL21) complex-mediated ubiquitination leads to stabilize CRY1 and counteract the activity of the SCF(FBXL3) complex. The SCF(FBXL3) and SCF(FBXL21) complexes probably mediate ubiquitination at different Lys residues. Ubiquitination at Lys-11 and Lys-107 are specifically ubiquitinated by the SCF(FBXL21) complex but not by the SCF(FBXL3) complex. Ubiquitination may be inhibited by PER2. Deubiquitinated by USP7. Undergoes autophagy-mediated degradation in the liver in a time-dependent manner. Autophagic degradation of CRY1 (an inhibitor of gluconeogenesis) occurs during periods of reduced feeding allowing induction of gluconeogenesis and maintenance of blood glucose levels. In terms of tissue distribution, expressed in all tissues tested including spleen, liver, skeletal muscle, kidney, brain, intestine, eye, harderian gland, liver and heart. Highest levels in the eye, brain, kidney and harderian gland. In the brain, especially located to the suprachiasma nucleus (SCN).

It is found in the cytoplasm. It localises to the nucleus. Its function is as follows. Transcriptional repressor which forms a core component of the circadian clock. The circadian clock, an internal time-keeping system, regulates various physiological processes through the generation of approximately 24 hour circadian rhythms in gene expression, which are translated into rhythms in metabolism and behavior. It is derived from the Latin roots 'circa' (about) and 'diem' (day) and acts as an important regulator of a wide array of physiological functions including metabolism, sleep, body temperature, blood pressure, endocrine, immune, cardiovascular, and renal function. Consists of two major components: the central clock, residing in the suprachiasmatic nucleus (SCN) of the brain, and the peripheral clocks that are present in nearly every tissue and organ system. Both the central and peripheral clocks can be reset by environmental cues, also known as Zeitgebers (German for 'timegivers'). The predominant Zeitgeber for the central clock is light, which is sensed by retina and signals directly to the SCN. The central clock entrains the peripheral clocks through neuronal and hormonal signals, body temperature and feeding-related cues, aligning all clocks with the external light/dark cycle. Circadian rhythms allow an organism to achieve temporal homeostasis with its environment at the molecular level by regulating gene expression to create a peak of protein expression once every 24 hours to control when a particular physiological process is most active with respect to the solar day. Transcription and translation of core clock components (CLOCK, NPAS2, BMAL1, BMAL2, PER1, PER2, PER3, CRY1 and CRY2) plays a critical role in rhythm generation, whereas delays imposed by post-translational modifications (PTMs) are important for determining the period (tau) of the rhythms (tau refers to the period of a rhythm and is the length, in time, of one complete cycle). A diurnal rhythm is synchronized with the day/night cycle, while the ultradian and infradian rhythms have a period shorter and longer than 24 hours, respectively. Disruptions in the circadian rhythms contribute to the pathology of cardiovascular diseases, cancer, metabolic syndromes and aging. A transcription/translation feedback loop (TTFL) forms the core of the molecular circadian clock mechanism. Transcription factors, CLOCK or NPAS2 and BMAL1 or BMAL2, form the positive limb of the feedback loop, act in the form of a heterodimer and activate the transcription of core clock genes and clock-controlled genes (involved in key metabolic processes), harboring E-box elements (5'-CACGTG-3') within their promoters. The core clock genes: PER1/2/3 and CRY1/2 which are transcriptional repressors form the negative limb of the feedback loop and interact with the CLOCK|NPAS2-BMAL1|BMAL2 heterodimer inhibiting its activity and thereby negatively regulating their own expression. This heterodimer also activates nuclear receptors NR1D1/2 and RORA/B/G, which form a second feedback loop and which activate and repress BMAL1 transcription, respectively. CRY1 and CRY2 have redundant functions but also differential and selective contributions at least in defining the pace of the SCN circadian clock and its circadian transcriptional outputs. More potent transcriptional repressor in cerebellum and liver than CRY2, though more effective in lengthening the period of the SCN oscillator. On its side, CRY2 seems to play a critical role in tuning SCN circadian period by opposing the action of CRY1. With CRY2, is dispensable for circadian rhythm generation but necessary for the development of intercellular networks for rhythm synchrony. Capable of translocating circadian clock core proteins such as PER proteins to the nucleus. Interacts with CLOCK-BMAL1 independently of PER proteins and is found at CLOCK-BMAL1-bound sites, suggesting that CRY may act as a molecular gatekeeper to maintain CLOCK-BMAL1 in a poised and repressed state until the proper time for transcriptional activation. Represses the CLOCK-BMAL1 induced transcription of BHLHE40/DEC1, ATF4, MTA1, KLF10 and NAMPT. May repress circadian target genes expression in collaboration with HDAC1 and HDAC2 through histone deacetylation. Mediates the clock-control activation of ATR and modulates ATR-mediated DNA damage checkpoint. In liver, mediates circadian regulation of cAMP signaling and gluconeogenesis by binding to membrane-coupled G proteins and blocking glucagon-mediated increases in intracellular cAMP concentrations and CREB1 phosphorylation. Inhibits hepatic gluconeogenesis by decreasing nuclear FOXO1 levels that down-regulates gluconeogenic gene expression. Besides its role in the maintenance of the circadian clock, is also involved in the regulation of other processes. Represses glucocorticoid receptor NR3C1/GR-induced transcriptional activity by binding to glucocorticoid response elements (GREs). Plays a key role in glucose and lipid metabolism modulation, in part, through the transcriptional regulation of genes involved in these pathways, such as LEP or ACSL4. Represses PPARD and its target genes in the skeletal muscle and limits exercise capacity. Plays an essential role in the generation of circadian rhythms in the retina. Represses the transcriptional activity of NR1I2. The chain is Cryptochrome-1 (CRY1) from Spalax judaei (Judean Mountains blind mole rat).